A 183-amino-acid chain; its full sequence is Small ribosomal subunit protein uS4c (183 aa).

Residues Met-82 to Asn-143 form the S4 RNA-binding domain.

It belongs to the universal ribosomal protein uS4 family. As to quaternary structure, part of the 30S ribosomal subunit. Contacts protein S5. The interaction surface between S4 and S5 is involved in control of translational fidelity.

The protein resides in the plastid. It is found in the chloroplast. Its function is as follows. One of the primary rRNA binding proteins, it binds directly to 16S rRNA where it nucleates assembly of the body of the 30S subunit. In terms of biological role, with S5 and S12 plays an important role in translational accuracy. The sequence is that of Small ribosomal subunit protein uS4c (rps4) from Crocosmia sp. (strain Porto Alegre 034).